Reading from the N-terminus, the 180-residue chain is Large ribosomal subunit protein uL5 (180 aa).

This sequence belongs to the universal ribosomal protein uL5 family. In terms of assembly, part of the 50S ribosomal subunit; part of the 5S rRNA/L5/L18/L25 subcomplex. Contacts the 5S rRNA and the P site tRNA. Forms a bridge to the 30S subunit in the 70S ribosome.

This is one of the proteins that bind and probably mediate the attachment of the 5S RNA into the large ribosomal subunit, where it forms part of the central protuberance. In the 70S ribosome it contacts protein S13 of the 30S subunit (bridge B1b), connecting the 2 subunits; this bridge is implicated in subunit movement. Contacts the P site tRNA; the 5S rRNA and some of its associated proteins might help stabilize positioning of ribosome-bound tRNAs. The protein is Large ribosomal subunit protein uL5 of Cupriavidus necator (strain ATCC 17699 / DSM 428 / KCTC 22496 / NCIMB 10442 / H16 / Stanier 337) (Ralstonia eutropha).